The chain runs to 224 residues: Peptidyl-prolyl cis-trans isomerase FKBP3 (224 aa).

Residue Ala-2 is modified to N-acetylalanine. A Phosphoserine modification is found at Ser-36. Residues 89 to 102 (KLNEDKPKETKSEE) show a composition bias toward basic and acidic residues. The tract at residues 89-113 (KLNEDKPKETKSEETLDEGPPKYTK) is disordered. Lys-99 is subject to N6-acetyllysine. Positions 128–224 (GDVVHCWYTG…IFEVELVDID (97 aa)) constitute a PPIase FKBP-type domain. The residue at position 152 (Ser-152) is a Phosphoserine. An N6-acetyllysine modification is found at Lys-170.

Belongs to the FKBP-type PPIase family.

The protein localises to the nucleus. It catalyses the reaction [protein]-peptidylproline (omega=180) = [protein]-peptidylproline (omega=0). With respect to regulation, inhibited preferentially by rapamycin over FK506. FK506- and rapamycin-binding proteins (FKBPs) constitute a family of receptors for the two immunosuppressants which inhibit T-cell proliferation by arresting two dinstinct cytoplasmic signal transmission pathways. PPIases accelerate the folding of proteins. This chain is Peptidyl-prolyl cis-trans isomerase FKBP3 (FKBP3), found in Bos taurus (Bovine).